A 132-amino-acid polypeptide reads, in one-letter code: Small ribosomal subunit protein uS8 (132 aa).

This sequence belongs to the universal ribosomal protein uS8 family. In terms of assembly, part of the 30S ribosomal subunit. Contacts proteins S5 and S12.

Functionally, one of the primary rRNA binding proteins, it binds directly to 16S rRNA central domain where it helps coordinate assembly of the platform of the 30S subunit. This chain is Small ribosomal subunit protein uS8, found in Borreliella afzelii (strain PKo) (Borrelia afzelii).